Reading from the N-terminus, the 194-residue chain is dCTP deaminase (194 aa).

DCTP is bound by residues 110–115 (RSSLAR), Asp-128, 136–138 (VLE), Tyr-171, Lys-178, and Gln-182. Glu-138 serves as the catalytic Proton donor/acceptor.

Belongs to the dCTP deaminase family. In terms of assembly, homotrimer.

The enzyme catalyses dCTP + H2O + H(+) = dUTP + NH4(+). It functions in the pathway pyrimidine metabolism; dUMP biosynthesis; dUMP from dCTP (dUTP route): step 1/2. Its function is as follows. Catalyzes the deamination of dCTP to dUTP. This chain is dCTP deaminase, found in Glaesserella parasuis serovar 5 (strain SH0165) (Haemophilus parasuis).